Reading from the N-terminus, the 577-residue chain is Urease subunit alpha (577 aa).

The Urease domain maps to 136 to 577 (GAIDCHVHLI…LPMAQRYFLF (442 aa)). Ni(2+) contacts are provided by His-141, His-143, and Lys-224. An N6-carboxylysine modification is found at Lys-224. Residue His-226 participates in substrate binding. The Ni(2+) site is built by His-253 and His-279. His-327 acts as the Proton donor in catalysis. Asp-367 is a binding site for Ni(2+).

This sequence belongs to the metallo-dependent hydrolases superfamily. Urease alpha subunit family. Heterotrimer of UreA (gamma), UreB (beta) and UreC (alpha) subunits. Three heterotrimers associate to form the active enzyme. Ni cation is required as a cofactor. In terms of processing, carboxylation allows a single lysine to coordinate two nickel ions.

The protein resides in the cytoplasm. It catalyses the reaction urea + 2 H2O + H(+) = hydrogencarbonate + 2 NH4(+). Its pathway is nitrogen metabolism; urea degradation; CO(2) and NH(3) from urea (urease route): step 1/1. The polypeptide is Urease subunit alpha (Mycobacterium marinum (strain ATCC BAA-535 / M)).